The sequence spans 288 residues: Bifunctional protein FolD (288 aa).

NADP(+) contacts are provided by residues 166-168 (GAS) and Ile232.

This sequence belongs to the tetrahydrofolate dehydrogenase/cyclohydrolase family. In terms of assembly, homodimer.

The enzyme catalyses (6R)-5,10-methylene-5,6,7,8-tetrahydrofolate + NADP(+) = (6R)-5,10-methenyltetrahydrofolate + NADPH. It carries out the reaction (6R)-5,10-methenyltetrahydrofolate + H2O = (6R)-10-formyltetrahydrofolate + H(+). It functions in the pathway one-carbon metabolism; tetrahydrofolate interconversion. Its function is as follows. Catalyzes the oxidation of 5,10-methylenetetrahydrofolate to 5,10-methenyltetrahydrofolate and then the hydrolysis of 5,10-methenyltetrahydrofolate to 10-formyltetrahydrofolate. The chain is Bifunctional protein FolD from Acidithiobacillus ferrooxidans (strain ATCC 23270 / DSM 14882 / CIP 104768 / NCIMB 8455) (Ferrobacillus ferrooxidans (strain ATCC 23270)).